Reading from the N-terminus, the 301-residue chain is Acetyl-coenzyme A carboxylase carboxyl transferase subunit beta (301 aa).

The CoA carboxyltransferase N-terminal domain occupies 25–294; it reads LWIKDPSTGE…NSDAPAPQKP (270 aa).

The protein belongs to the AccD/PCCB family. Acetyl-CoA carboxylase is a heterohexamer composed of biotin carboxyl carrier protein (AccB), biotin carboxylase (AccC) and two subunits each of ACCase subunit alpha (AccA) and ACCase subunit beta (AccD).

It localises to the cytoplasm. The catalysed reaction is N(6)-carboxybiotinyl-L-lysyl-[protein] + acetyl-CoA = N(6)-biotinyl-L-lysyl-[protein] + malonyl-CoA. The protein operates within lipid metabolism; malonyl-CoA biosynthesis; malonyl-CoA from acetyl-CoA: step 1/1. Component of the acetyl coenzyme A carboxylase (ACC) complex. Biotin carboxylase (BC) catalyzes the carboxylation of biotin on its carrier protein (BCCP) and then the CO(2) group is transferred by the transcarboxylase to acetyl-CoA to form malonyl-CoA. This chain is Acetyl-coenzyme A carboxylase carboxyl transferase subunit beta, found in Brucella abortus (strain 2308).